The chain runs to 1034 residues: Presequence protease, mitochondrial (1034 aa).

A mitochondrion-targeting transit peptide spans 1 to 29 (MLKGGMLSRWKMWSPQYKILRNHLINFKS). Zn(2+) is bound at residue H128. E131 serves as the catalytic Proton acceptor. Zn(2+)-binding residues include H132 and E229.

Belongs to the peptidase M16 family. PreP subfamily. Homodimer. It depends on Zn(2+) as a cofactor.

Its subcellular location is the mitochondrion. In terms of biological role, ATP-independent protease that degrades mitochondrial transit peptides after their cleavage. Also degrades other unstructured peptides. The polypeptide is Presequence protease, mitochondrial (Drosophila melanogaster (Fruit fly)).